A 429-amino-acid chain; its full sequence is G2/mitotic-specific cyclin-B1 (429 aa).

Polar residues predominate over residues 1–14 (MALRVTRNTKLNTE). 2 disordered regions span residues 1–21 (MALR…KVSM) and 71–128 (TGKV…PMET). Lys73 is subject to N6-acetyllysine. Residues 92–106 (PEVELAEPEPEPEPV) show a composition bias toward acidic residues. Ser122 carries the phosphoserine; by CDK1 modification. Ser124 carries the post-translational modification Phosphoserine. Ser129 is modified (phosphoserine; by PLK1). Residue Ser143 is modified to Phosphoserine. Interaction with CDK2 regions lie at residues 165–173 (EYVKDIYAY) and 254–257 (YEEM). Residue Thr317 is modified to Phosphothreonine.

Belongs to the cyclin family. Cyclin AB subfamily. As to quaternary structure, interacts with the CDC2 protein kinase to form a serine/threonine kinase holoenzyme complex also known as maturation promoting factor (MPF). The cyclin subunit imparts substrate specificity to the complex. Binds HEI10. Interacts with catalytically active RALBP1 and CDC2 during mitosis to form an endocytotic complex during interphase. Interacts with CCNF; interaction is required for nuclear localization. Interacts with CDK5RAP3. Interacts with RFPL4A and UBE2A. Interacts with INCA1. Ubiquitinated by the SCF(NIPA) complex during interphase, leading to its destruction. Not ubiquitinated during G2/M phases. In terms of processing, phosphorylated by PLK1 at Ser-129 on centrosomes during prophase: phosphorylation by PLK1 does not cause nuclear import. Phosphorylation at Ser-143 was also reported to be mediated by PLK1 but Ser-129 seems to be the primary phosphorylation site.

The protein resides in the cytoplasm. It localises to the nucleus. Its subcellular location is the cytoskeleton. The protein localises to the microtubule organizing center. It is found in the centrosome. Essential for the control of the cell cycle at the G2/M (mitosis) transition. The polypeptide is G2/mitotic-specific cyclin-B1 (CCNB1) (Cricetulus griseus (Chinese hamster)).